Reading from the N-terminus, the 772-residue chain is MGTKFLALGLSLCLVLSSFYQVSCQDEGTGSLSTLDLIEHEYQTSVNSLQGNEAVDQTETSGQKNSTVSDNNTISLSLSEEPALETLKESVDTSAELGAVTDEVDKPSSMLDHIELEFEAHINELKEAGSDGINKVEESKDDEEAARRHKMLEAIEREFEAAHAGFEQLKTDDSAQGLDDEQSAKRQSMLDEIERDFEAATKGLEQLKADDLTGINDEEHAAKRQKMLEEIEREFEEATKGLEELRHSTSSTDDEAQSAKRQNMLDEIEREFEAATSGLKELKINAHTVKDDVDDKEQDAKRQSMLDAIEREFEAVTESFKQLEDIADNKAEGDDESAKRQSMLDEIEREFEAATNSLKQLNLDDFSEGDDSAESARRNSMLEAIEREFEAATKGLEELKANDSTGDKDDDEHVARRKIMLEAIEREFEAATKGLEELKNESEQAENKRNSMLEAFEREFEAATNAKANGENSAKNPSTISTTVQKSSGGYNAGLEGLLKPADGVCGCFNKDKDGLQADTDSSINIAEILAEESKLQGSGTSRLTTSLNNLVDTHRKETSSKVGSVLGSSSSVTSTTSESAATSESIESLKQTLRKLRGLSARDLVNHPNFDAIIAAGTRYEVLSSASIGYISLLAKYKTVIKEGLEASQRVQIAQTRAKLLKETAMEKQRTVDSVFAAAKTTAQRGDALHIRIVAIKKLLAKLEAEKVDVDSKFTSLTTSLSELLKEASQAYEEYHEAVHKAKDEQAAEEFAVETTKRAEHIWVEFLSSLN.

The N-terminal stretch at 1–24 (MGTKFLALGLSLCLVLSSFYQVSC) is a signal peptide. A disordered region spans residues 49–72 (LQGNEAVDQTETSGQKNSTVSDNN). EFE repeat repeat units lie at residues 98–138 (GAVT…KVEE), 139–176 (SKDD…DSAQ), 177–213 (GLDD…DDLT), 214–251 (GIND…STSS), 252–292 (TDDE…VKDD), 293–330 (VDDK…ADNK), 331–368 (AEGD…DFSE), 369–407 (GDDS…STGD), 408–439 (KDDD…EELK), and 440–472 (NESE…NGEN). A 10 X approximate EFE repeat region spans residues 98-472 (GAVTDEVDKP…ATNAKANGEN (375 aa)). The stretch at 187–476 (QSMLDEIERD…KANGENSAKN (290 aa)) forms a coiled coil. Disordered stretches follow at residues 465-487 (NAKA…VQKS) and 555-585 (HRKE…ATSE). The segment covering 466–487 (AKANGENSAKNPSTISTTVQKS) has biased composition (polar residues). Positions 561–585 (SKVGSVLGSSSSVTSTTSESAATSE) are enriched in low complexity. Residues 688–748 (DALHIRIVAI…AVHKAKDEQA (61 aa)) are a coiled coil.

Has no interaction with PYK10 and is not part of the PYK10 complex. Interacts directly or indirectly with MEB1 and MEB2. Expressed in roots. Detected in shoot apex.

Its subcellular location is the endoplasmic reticulum lumen. Functionally, responsible for the ER body formation. Regulates the number and shape of the ER bodies and the accumulation of PYK10 in ER bodies, but is not involved in the expression of PYK10. The polypeptide is TSA1-like protein (NAI2) (Arabidopsis thaliana (Mouse-ear cress)).